The sequence spans 158 residues: NAD(P)H-quinone oxidoreductase subunit J, chloroplastic (158 aa).

The protein belongs to the complex I 30 kDa subunit family. NDH is composed of at least 16 different subunits, 5 of which are encoded in the nucleus.

Its subcellular location is the plastid. It is found in the chloroplast thylakoid membrane. It carries out the reaction a plastoquinone + NADH + (n+1) H(+)(in) = a plastoquinol + NAD(+) + n H(+)(out). The enzyme catalyses a plastoquinone + NADPH + (n+1) H(+)(in) = a plastoquinol + NADP(+) + n H(+)(out). NDH shuttles electrons from NAD(P)H:plastoquinone, via FMN and iron-sulfur (Fe-S) centers, to quinones in the photosynthetic chain and possibly in a chloroplast respiratory chain. The immediate electron acceptor for the enzyme in this species is believed to be plastoquinone. Couples the redox reaction to proton translocation, and thus conserves the redox energy in a proton gradient. The sequence is that of NAD(P)H-quinone oxidoreductase subunit J, chloroplastic from Olimarabidopsis pumila (Dwarf rocket).